The following is a 347-amino-acid chain: S-adenosylmethionine:tRNA ribosyltransferase-isomerase (347 aa).

This sequence belongs to the QueA family. In terms of assembly, monomer.

Its subcellular location is the cytoplasm. The catalysed reaction is 7-aminomethyl-7-carbaguanosine(34) in tRNA + S-adenosyl-L-methionine = epoxyqueuosine(34) in tRNA + adenine + L-methionine + 2 H(+). It functions in the pathway tRNA modification; tRNA-queuosine biosynthesis. Transfers and isomerizes the ribose moiety from AdoMet to the 7-aminomethyl group of 7-deazaguanine (preQ1-tRNA) to give epoxyqueuosine (oQ-tRNA). The protein is S-adenosylmethionine:tRNA ribosyltransferase-isomerase of Streptococcus thermophilus (strain CNRZ 1066).